The chain runs to 484 residues: Glutamyl-tRNA(Gln) amidotransferase subunit A (484 aa).

Catalysis depends on charge relay system residues Lys-78 and Ser-153. The Acyl-ester intermediate role is filled by Ser-177.

The protein belongs to the amidase family. GatA subfamily. As to quaternary structure, heterotrimer of A, B and C subunits.

The enzyme catalyses L-glutamyl-tRNA(Gln) + L-glutamine + ATP + H2O = L-glutaminyl-tRNA(Gln) + L-glutamate + ADP + phosphate + H(+). In terms of biological role, allows the formation of correctly charged Gln-tRNA(Gln) through the transamidation of misacylated Glu-tRNA(Gln) in organisms which lack glutaminyl-tRNA synthetase. The reaction takes place in the presence of glutamine and ATP through an activated gamma-phospho-Glu-tRNA(Gln). This chain is Glutamyl-tRNA(Gln) amidotransferase subunit A, found in Thermodesulfovibrio yellowstonii (strain ATCC 51303 / DSM 11347 / YP87).